Here is a 757-residue protein sequence, read N- to C-terminus: 5-methyltetrahydropteroyltriglutamate--homocysteine methyltransferase (757 aa).

5-methyltetrahydropteroyltri-L-glutamate is bound by residues Arg-17–Lys-20 and Lys-117. L-homocysteine is bound by residues Ile-432–Ser-434 and Glu-485. Residues Ile-432–Ser-434 and Glu-485 each bind L-methionine. 5-methyltetrahydropteroyltri-L-glutamate is bound by residues Arg-516–Cys-517 and Trp-562. Position 600 (Asp-600) interacts with L-homocysteine. Residue Asp-600 coordinates L-methionine. A 5-methyltetrahydropteroyltri-L-glutamate-binding site is contributed by Glu-606. The Zn(2+) site is built by His-642, Cys-644, and Glu-666. His-695 (proton donor) is an active-site residue. Cys-727 contacts Zn(2+).

Belongs to the vitamin-B12 independent methionine synthase family. The cofactor is Zn(2+).

The catalysed reaction is 5-methyltetrahydropteroyltri-L-glutamate + L-homocysteine = tetrahydropteroyltri-L-glutamate + L-methionine. The protein operates within amino-acid biosynthesis; L-methionine biosynthesis via de novo pathway; L-methionine from L-homocysteine (MetE route): step 1/1. In terms of biological role, catalyzes the transfer of a methyl group from 5-methyltetrahydrofolate to homocysteine resulting in methionine formation. In Erwinia tasmaniensis (strain DSM 17950 / CFBP 7177 / CIP 109463 / NCPPB 4357 / Et1/99), this protein is 5-methyltetrahydropteroyltriglutamate--homocysteine methyltransferase.